The primary structure comprises 116 residues: Class I hydrophobin 1 (116 aa).

An N-terminal signal peptide occupies residues 1-19 (MLFKQAILVATTLTTLAVA). 4 cysteine pairs are disulfide-bonded: C35-C95, C42-C89, C43-C76, and C96-C109. N-linked (GlcNAc...) asparagine glycans are attached at residues N44 and N100.

This sequence belongs to the fungal hydrophobin family. As to quaternary structure, self-assembles to form functional amyloid fibrils called rodlets. Self-assembly into fibrillar rodlets occurs spontaneously at hydrophobic:hydrophilic interfaces and the rodlets further associate laterally to form amphipathic monolayers.

Its subcellular location is the secreted. It localises to the cell wall. Functionally, aerial growth, conidiation, and dispersal of filamentous fungi in the environment rely upon a capability of their secreting small amphipathic proteins called hydrophobins (HPBs) with low sequence identity. Class I can self-assemble into an outermost layer of rodlet bundles on aerial cell surfaces, conferring cellular hydrophobicity that supports fungal growth, development and dispersal; whereas Class II form highly ordered films at water-air interfaces through intermolecular interactions but contribute nothing to the rodlet structure. The polypeptide is Class I hydrophobin 1 (Pleurotus ostreatus (strain PC15) (Oyster mushroom)).